The sequence spans 428 residues: Tyrosine--tRNA ligase (428 aa).

Tyr-41 contacts L-tyrosine. The 'HIGH' region motif lies at Pro-46–His-55. Tyr-179 and Gln-183 together coordinate L-tyrosine. Residues Lys-239–Thr-243 carry the 'KMSKS' region motif. Lys-242 contacts ATP. One can recognise an S4 RNA-binding domain in the interval Ala-361–Gly-418.

Belongs to the class-I aminoacyl-tRNA synthetase family. TyrS type 1 subfamily. In terms of assembly, homodimer.

The protein localises to the cytoplasm. The enzyme catalyses tRNA(Tyr) + L-tyrosine + ATP = L-tyrosyl-tRNA(Tyr) + AMP + diphosphate + H(+). In terms of biological role, catalyzes the attachment of tyrosine to tRNA(Tyr) in a two-step reaction: tyrosine is first activated by ATP to form Tyr-AMP and then transferred to the acceptor end of tRNA(Tyr). This is Tyrosine--tRNA ligase from Citrobacter koseri (strain ATCC BAA-895 / CDC 4225-83 / SGSC4696).